A 227-amino-acid chain; its full sequence is Ribonuclease 3 (227 aa).

An RNase III domain is found at 4–133; the sequence is FETLEKLLSY…LIAAIYLDSN (130 aa). Glu46 contributes to the Mg(2+) binding site. Residue Asp50 is part of the active site. Positions 119 and 122 each coordinate Mg(2+). The active site involves Glu122. Positions 158–226 constitute a DRBM domain; that stretch reads DPKTALQEWA…ARSLLHRLKN (69 aa).

The protein belongs to the ribonuclease III family. Homodimer. It depends on Mg(2+) as a cofactor.

Its subcellular location is the cytoplasm. The enzyme catalyses Endonucleolytic cleavage to 5'-phosphomonoester.. Digests double-stranded RNA. Involved in the processing of primary rRNA transcript to yield the immediate precursors to the large and small rRNAs (23S and 16S). Processes some mRNAs, and tRNAs when they are encoded in the rRNA operon. Processes pre-crRNA and tracrRNA of type II CRISPR loci if present in the organism. This Rickettsia massiliae (strain Mtu5) protein is Ribonuclease 3.